The primary structure comprises 102 residues: Ferredoxin (102 aa).

2 4Fe-4S ferredoxin-type domains span residues 45–73 (VSVN…ELVE) and 74–102 (TWIE…EVMK). Residues Cys-54, Cys-57, Cys-60, Cys-64, Cys-83, Cys-86, Cys-89, and Cys-93 each contribute to the [4Fe-4S] cluster site.

The cofactor is [4Fe-4S] cluster.

Its pathway is membrane lipid metabolism; glycerophospholipid metabolism. Its function is as follows. Ferredoxin that is the specific electron donor for the geranylgeranyl reductase GGR involved in the biosynthesis of archaeal membrane lipids. This Methanosarcina acetivorans (strain ATCC 35395 / DSM 2834 / JCM 12185 / C2A) protein is Ferredoxin.